The following is a 434-amino-acid chain: ATP-dependent RNA helicase SUB2 (434 aa).

Over residues 1 to 16 (MSGEEDLIDYSDDELN) the composition is skewed to acidic residues. The disordered stretch occupies residues 1 to 32 (MSGEEDLIDYSDDELNNETTAPASNGKKGDAA). A Q motif motif is present at residues 50 to 78 (TGFRDFLLKPELLRAIADCGFEHPSEVQQ). One can recognise a Helicase ATP-binding domain in the interval 81-256 (IPQAMLGGDI…RKFMQNPTEH (176 aa)). 94–101 (AKSGLGKT) serves as a coordination point for ATP. The DEAD box signature appears at 203–206 (DECD). The region spanning 268–429 (GLQQYYIPLE…EFPKEGIDAS (162 aa)) is the Helicase C-terminal domain.

It belongs to the DEAD box helicase family. DECD subfamily.

The protein resides in the nucleus. It catalyses the reaction ATP + H2O = ADP + phosphate + H(+). Its function is as follows. ATP-binding RNA helicase involved in transcription elongation and required for the export of mRNA out of the nucleus. SUB2 also plays a role in pre-mRNA splicing and spliceosome assembly. May be involved in rDNA and telomeric silencing, and maintenance of genome integrity. This Chaetomium globosum (strain ATCC 6205 / CBS 148.51 / DSM 1962 / NBRC 6347 / NRRL 1970) (Soil fungus) protein is ATP-dependent RNA helicase SUB2 (SUB2).